The chain runs to 122 residues: Large ribosomal subunit protein uL14 (122 aa).

It belongs to the universal ribosomal protein uL14 family. As to quaternary structure, part of the 50S ribosomal subunit. Forms a cluster with proteins L3 and L19. In the 70S ribosome, L14 and L19 interact and together make contacts with the 16S rRNA in bridges B5 and B8.

Its function is as follows. Binds to 23S rRNA. Forms part of two intersubunit bridges in the 70S ribosome. This Thermomicrobium roseum (strain ATCC 27502 / DSM 5159 / P-2) protein is Large ribosomal subunit protein uL14.